Reading from the N-terminus, the 467-residue chain is UDP-N-acetylmuramoylalanine--D-glutamate ligase (467 aa).

115-121 (GTDGKTT) is a binding site for ATP.

It belongs to the MurCDEF family.

The protein resides in the cytoplasm. The catalysed reaction is UDP-N-acetyl-alpha-D-muramoyl-L-alanine + D-glutamate + ATP = UDP-N-acetyl-alpha-D-muramoyl-L-alanyl-D-glutamate + ADP + phosphate + H(+). It participates in cell wall biogenesis; peptidoglycan biosynthesis. Its function is as follows. Cell wall formation. Catalyzes the addition of glutamate to the nucleotide precursor UDP-N-acetylmuramoyl-L-alanine (UMA). This chain is UDP-N-acetylmuramoylalanine--D-glutamate ligase, found in Chlorobaculum parvum (strain DSM 263 / NCIMB 8327) (Chlorobium vibrioforme subsp. thiosulfatophilum).